Here is a 208-residue protein sequence, read N- to C-terminus: Calcyphosin-like protein (208 aa).

EF-hand domains follow at residues 39-74 (AGIK…YAVV), 75-110 (MEKE…PMSR), 111-146 (ARKE…KHHP), and 154-191 (TEEQ…VSAS). 10 residues coordinate Ca(2+): Asp-52, Asn-54, Asn-56, Thr-58, Glu-63, Asp-88, Asp-90, Ser-92, Thr-94, and Glu-99.

Its subcellular location is the cytoplasm. The sequence is that of Calcyphosin-like protein (Capsl) from Mus musculus (Mouse).